The primary structure comprises 147 residues: Protein OPG060 (147 aa).

The protein belongs to the orthopoxvirus OPG058 family.

This is Protein OPG060 (OPG060) from Bos taurus (Bovine).